Here is a 515-residue protein sequence, read N- to C-terminus: MGVTMAVGLAKAAMGKISSAIGERSKRISGAMNEPRRKRKILLVIVCIAMLLDNMLYMVIVPIIPNYLETIRTYKLVYITTPSNGTNGSLLNSTQRAVLERNPNANEDIQIGVLFASKAILQLLSNPFTGTFIDRVGYDIPLLIGLTIMFFSTITFAFGESYAVLFAARSLQGLGSAFADTSGIAMIADKYTEESERTQALGIALAFISFGSLVAPPFGGVLYQFAGKWVPFLVLSFVCLLDGILLLMVVTPFASRTRENMLQGTPIYKLMIDPYIAVVAGALTTCNIPLAFLEPTISNWMKKTMNASEWQMGITWLPAFFPHILGVYITVKLAAKYPNYQWFYGAVGLVIIGASSCTIPACRNFEELIIPLCALCFGIALVDTALLPTLAFLVDIRYVSVYGSVYAIADISYSVAYALGPIMAGQIVHDLGFVQLNLGMGLVNILYAPALLFLRNVCQMKPSLSERNILLEEGPKGLYDTIIMEERKAAKEPHGSSSGNHSVHAVLSDQEGYSE.

Topologically, residues 1-40 (MGVTMAVGLAKAAMGKISSAIGERSKRISGAMNEPRRKRK) are cytoplasmic. The chain crosses the membrane as a helical span at residues 41–61 (ILLVIVCIAMLLDNMLYMVIV). At 62-112 (PIIPNYLETIRTYKLVYITTPSNGTNGSLLNSTQRAVLERNPNANEDIQIG) the chain is on the lumenal, vesicle side. 3 N-linked (GlcNAc...) asparagine glycosylation sites follow: Asn-84, Asn-87, and Asn-92. A helical membrane pass occupies residues 113–133 (VLFASKAILQLLSNPFTGTFI). Residues 134 to 139 (DRVGYD) lie on the Cytoplasmic side of the membrane. The chain crosses the membrane as a helical span at residues 140-160 (IPLLIGLTIMFFSTITFAFGE). At 161-169 (SYAVLFAAR) the chain is on the lumenal, vesicle side. The helical transmembrane segment at 170 to 190 (SLQGLGSAFADTSGIAMIADK) threads the bilayer. The Cytoplasmic segment spans residues 191–201 (YTEESERTQAL). The chain crosses the membrane as a helical span at residues 202–222 (GIALAFISFGSLVAPPFGGVL). At 223-229 (YQFAGKW) the chain is on the lumenal, vesicle side. The helical transmembrane segment at 230 to 250 (VPFLVLSFVCLLDGILLLMVV) threads the bilayer. At 251–271 (TPFASRTRENMLQGTPIYKLM) the chain is on the cytoplasmic side. The helical transmembrane segment at 272 to 292 (IDPYIAVVAGALTTCNIPLAF) threads the bilayer. Topologically, residues 293-310 (LEPTISNWMKKTMNASEW) are lumenal, vesicle. Asn-306 carries an N-linked (GlcNAc...) asparagine glycan. The helical transmembrane segment at 311–331 (QMGITWLPAFFPHILGVYITV) threads the bilayer. Topologically, residues 332–341 (KLAAKYPNYQ) are cytoplasmic. The chain crosses the membrane as a helical span at residues 342-362 (WFYGAVGLVIIGASSCTIPAC). Topologically, residues 363-367 (RNFEE) are lumenal, vesicle. The helical transmembrane segment at 368-388 (LIIPLCALCFGIALVDTALLP) threads the bilayer. The Cytoplasmic portion of the chain corresponds to 389 to 404 (TLAFLVDIRYVSVYGS). Residues 405-425 (VYAIADISYSVAYALGPIMAG) traverse the membrane as a helical segment. At 426 to 432 (QIVHDLG) the chain is on the lumenal, vesicle side. Residues 433 to 453 (FVQLNLGMGLVNILYAPALLF) traverse the membrane as a helical segment. At 454–515 (LRNVCQMKPS…VLSDQEGYSE (62 aa)) the chain is on the cytoplasmic side. Positions 489-515 (AAKEPHGSSSGNHSVHAVLSDQEGYSE) are disordered.

The protein belongs to the major facilitator superfamily. Vesicular transporter family. In terms of tissue distribution, electric lobe.

The protein localises to the membrane. Functionally, involved in acetylcholine transport into synaptic vesicles. The chain is Vesicular acetylcholine transporter from Tetronarce californica (Pacific electric ray).